We begin with the raw amino-acid sequence, 34 residues long: Corticostatin-6 (34 aa).

Disulfide bonds link C3–C31, C5–C20, and C10–C30.

The protein belongs to the alpha-defensin family. As to expression, lung, spleen, small intestine, pituitary gland, adrenal medulla and plasma.

The protein resides in the secreted. In terms of biological role, microbicidal activity and inhibits corticotropin (ACTH) stimulated corticosterone production. This chain is Corticostatin-6, found in Oryctolagus cuniculus (Rabbit).